Reading from the N-terminus, the 846-residue chain is Vacuolar-sorting protein BRO1 (846 aa).

A BRO1 domain is found at serine 5–threonine 403. A coiled-coil region spans residues leucine 565–lysine 592. A disordered region spans residues serine 726–glutamine 846. 2 stretches are compositionally biased toward low complexity: residues alanine 763–proline 780 and threonine 790–glutamine 823. Pro residues predominate over residues proline 824–proline 836.

Homodimer. Interacts with AMSH3. Interacts with VPS32.1/SNF7B and VPS32.2/SNF7A. Interacts with ELC/VPS23A.

The protein localises to the cytoplasm. The protein resides in the late endosome. It localises to the endosome. It is found in the multivesicular body. In terms of biological role, class E VPS protein involved in concentration and sorting of cargo proteins of the multivesicular body (MVB) for incorporation into intralumenal vesicles. Fusion between endosomes and the vacuole will then target the cargo proteins to the vacuolar lumen. Associates with FREE1 and ELC to perform function in the ESCRT-I complex. Binds ubiquitin in vitro. Plays a role in the biogenesis of vacuole and multivesicular bodies (MVBs). Required for the endosomal location of AMSH3. Mediates high-affinity phosphate transporter trafficking to maintain phosphate homeostasis. Regulates vacuolar degradation of PHT1-1. This is Vacuolar-sorting protein BRO1 from Arabidopsis thaliana (Mouse-ear cress).